A 982-amino-acid chain; its full sequence is Ubiquitin carboxyl-terminal hydrolase 15 (982 aa).

Residues 7 to 118 form the DUSP domain; it reads VDLETQRSEV…SQQPIARKVV (112 aa). The region spanning 288–933 is the USP domain; it reads CGLSNLGNTC…AAYVLFYQRQ (646 aa). Cys297 functions as the Nucleophile in the catalytic mechanism. Residues 623–695 form a disordered region; sequence TEENDGSLHC…DNDSENGLCT (73 aa). Over residues 655-672 the composition is skewed to acidic residues; it reads METDEPDDESSQDQELPS. Catalysis depends on His891, which acts as the Proton acceptor. Residues 950 to 982 are disordered; the sequence is QGASAATGAPHESDEESNEDENDIENENCMHTN. The span at 962–975 shows a compositional bias: acidic residues; that stretch reads SDEESNEDENDIEN.

This sequence belongs to the peptidase C19 family.

The protein localises to the cytoplasm. It is found in the nucleus. The catalysed reaction is Thiol-dependent hydrolysis of ester, thioester, amide, peptide and isopeptide bonds formed by the C-terminal Gly of ubiquitin (a 76-residue protein attached to proteins as an intracellular targeting signal).. Hydrolase that removes conjugated ubiquitin from target proteins and regulates various pathways such as the TGF-beta receptor signaling and NF-kappa-B pathways. Acts as a key regulator of TGF-beta receptor signaling pathway, but the precise mechanism is still unclear: according to a report, acts by promoting deubiquitination of monoubiquitinated R-SMADs, thereby alleviating inhibition of R-SMADs and promoting activation of TGF-beta target genes. According to another reports, regulates the TGF-beta receptor signaling pathway by mediating deubiquitination and stabilization of tgfbr1, leading to an enhanced TGF-beta signal. May also regulate gene expression and/or DNA repair through the deubiquitination of histone H2B. Involved in endosome organization by mediating deubiquitination of rnf26 target(s), releasing vesicles that are restrained in the perinuclear region. This Xenopus tropicalis (Western clawed frog) protein is Ubiquitin carboxyl-terminal hydrolase 15 (usp15).